Reading from the N-terminus, the 345-residue chain is Matrix protein (345 aa).

The segment at 148-185 (KKKSKAKSAEGPSASTEDIKDSDTKGNQDIGDNGDLNS) is disordered. The span at 164 to 173 (EDIKDSDTKG) shows a compositional bias: basic and acidic residues.

It is found in the virion. The protein is Matrix protein (M2) of Aphis (Hairy beggarticks).